The following is a 470-amino-acid chain: Choline/ethanolamine transporter flvcr2a (470 aa).

Residues 1 to 23 lie on the Cytoplasmic side of the membrane; sequence MCDKADNHIDVQPEGNLEVSSVS. A helical transmembrane segment spans residues 24–48; the sequence is STRLYRRRWVILLLFSSYSLCNAFQ. Choline-binding residues include Asn45, Ala46, and Trp49. Topologically, residues 49 to 66 are extracellular; it reads WIQYGIINNIFMKFYQVS. A helical membrane pass occupies residues 67 to 94; the sequence is SFAVDWLSMVYMLTYIPFIFPVTWLLER. Topologically, residues 95–96 are cytoplasmic; the sequence is KG. Residues 97-116 traverse the membrane as a helical segment; the sequence is LRVVALLAASINCAGTWIKV. Topologically, residues 117 to 123 are extracellular; that stretch reads ASVQPSL. Residues 124–152 traverse the membrane as a helical segment; sequence FWVTMLGQFACSCAQVFILGMPSQVASVW. Choline-binding residues include Gln138 and Leu142. At 153-157 the chain is on the cytoplasmic side; that stretch reads FGSDE. The helical transmembrane segment at 158 to 183 threads the bilayer; it reads VSTACAIGVFGNQLGIAIGFLVPPVL. The Extracellular portion of the chain corresponds to 184–188; it reads VPNVE. Residues 189–218 traverse the membrane as a helical segment; that stretch reads DMGELAEHISIMFYITAAVATLIFLLVVFV. Residues 219-254 lie on the Cytoplasmic side of the membrane; it reads FQEKPETPPSLAQVALRNMPTGQHSYLASIARLMCN. A helical transmembrane segment spans residues 255 to 285; the sequence is KPFILLLISYGLNVGSFYAVSTLLNRMIIEH. Residue Tyr272 coordinates choline. Over 286–289 the chain is Extracellular; the sequence is YPGE. The helical transmembrane segment at 290 to 318 threads the bilayer; the sequence is EVNAGRIGLTLVVAGVVGSLICGVWLDKT. Residues 319 to 320 are Cytoplasmic-facing; it reads KT. A helical transmembrane segment spans residues 321–343; sequence YKQTTLSVYLLSFVGMLIYSFTL. The Extracellular portion of the chain corresponds to 344–346; the sequence is NLG. A helical membrane pass occupies residues 347-376; the sequence is HLWLVFLTSGVLGFFMTGYLPLGFEFAVEL. Residues 377–384 are Cytoplasmic-facing; it reads TYPESEGT. The helical transmembrane segment at 385–410 threads the bilayer; the sequence is SSGLLNCSAQVFGIAFTIIQGKIIDH. Position 394 (Gln394) interacts with choline. Residues 411-412 lie on the Extracellular side of the membrane; it reads FG. A helical transmembrane segment spans residues 413–435; that stretch reads TLAGNIFLCVFLLIGSIMTAFIK. At 436–470 the chain is on the cytoplasmic side; sequence SDLRRQKANQETGGNADSSVHPQHGETLPVKEVKM. A compositionally biased stretch (polar residues) spans 445-456; that stretch reads QETGGNADSSVH. The interval 445 to 470 is disordered; that stretch reads QETGGNADSSVHPQHGETLPVKEVKM.

Belongs to the major facilitator superfamily. Feline leukemia virus subgroup C receptor (TC 2.A.1.28.1) family.

It localises to the cell membrane. The protein localises to the mitochondrion membrane. Its subcellular location is the endoplasmic reticulum membrane. It catalyses the reaction choline(out) = choline(in). The enzyme catalyses ethanolamine(in) = ethanolamine(out). It carries out the reaction heme b(in) = heme b(out). Choline uniporter that specifically mediates choline uptake at the blood-brain-barrier. Responsible for the majority of choline uptake across the blood-brain-barrier from the circulation into the brain. Choline, a nutrient critical for brain development, is a precursor of phosphatidylcholine, as well as betaine. Also mediates transport of ethanolamine. Choline and ethanolamine transport is not coupled with proton transport and is exclusively driven by the choline gradient across the plasma membrane. Also acts as a heme b transporter. This is Choline/ethanolamine transporter flvcr2a from Danio rerio (Zebrafish).